We begin with the raw amino-acid sequence, 715 residues long: Polyribonucleotide nucleotidyltransferase (715 aa).

D491 and D497 together coordinate Mg(2+). Positions 558–617 (PKIMTMTINPEKIRDVIGPQGRVINKIIEETGVKIDIEQDGRVFIASINHEANLRAKQII) constitute a KH domain. Residues 627-695 (GQVYLGTVKR…DQGRVNLSRK (69 aa)) form the S1 motif domain.

It belongs to the polyribonucleotide nucleotidyltransferase family. It depends on Mg(2+) as a cofactor.

It is found in the cytoplasm. It carries out the reaction RNA(n+1) + phosphate = RNA(n) + a ribonucleoside 5'-diphosphate. Involved in mRNA degradation. Catalyzes the phosphorolysis of single-stranded polyribonucleotides processively in the 3'- to 5'-direction. The chain is Polyribonucleotide nucleotidyltransferase from Brevibacillus brevis (strain 47 / JCM 6285 / NBRC 100599).